The chain runs to 282 residues: Bis(5'-nucleosyl)-tetraphosphatase, symmetrical (282 aa).

This sequence belongs to the Ap4A hydrolase family.

The enzyme catalyses P(1),P(4)-bis(5'-adenosyl) tetraphosphate + H2O = 2 ADP + 2 H(+). Functionally, hydrolyzes diadenosine 5',5'''-P1,P4-tetraphosphate to yield ADP. In Salmonella arizonae (strain ATCC BAA-731 / CDC346-86 / RSK2980), this protein is Bis(5'-nucleosyl)-tetraphosphatase, symmetrical.